We begin with the raw amino-acid sequence, 161 residues long: Phosphopantetheine adenylyltransferase (161 aa).

S9 contributes to the substrate binding site. ATP is bound by residues 9 to 10 (SF) and H17. The substrate site is built by K41, L73, and K87. ATP is bound by residues 88-90 (GLR), E98, and 123-129 (YSYLSSS).

This sequence belongs to the bacterial CoaD family. In terms of assembly, homohexamer. Mg(2+) serves as cofactor.

The protein localises to the cytoplasm. It carries out the reaction (R)-4'-phosphopantetheine + ATP + H(+) = 3'-dephospho-CoA + diphosphate. Its pathway is cofactor biosynthesis; coenzyme A biosynthesis; CoA from (R)-pantothenate: step 4/5. In terms of biological role, reversibly transfers an adenylyl group from ATP to 4'-phosphopantetheine, yielding dephospho-CoA (dPCoA) and pyrophosphate. The protein is Phosphopantetheine adenylyltransferase of Clostridium novyi (strain NT).